Reading from the N-terminus, the 105-residue chain is DNA-binding protein HU (105 aa).

The protein belongs to the bacterial histone-like protein family.

In terms of biological role, histone-like DNA-binding protein which is capable of wrapping DNA to stabilize it, and thus to prevent its denaturation under extreme environmental conditions. The protein is DNA-binding protein HU (hup) of Treponema pallidum (strain Nichols).